The chain runs to 707 residues: Caprin-1 (707 aa).

Composition is skewed to low complexity over residues 1–15 (MPSA…SKSS) and 22–43 (GSSG…PATG). The segment at 1–48 (MPSATSHSGSGSKSSGPPPPSGSSGSEAAAGAAAPASQHPATGTGAVQ) is disordered. Pro2 carries the N-acetylproline modification. Ser10 carries the post-translational modification Phosphoserine. The stretch at 58-92 (VIDKKLRNLEKKKGKLDDYQERMNKGERLNQDQLD) forms a coiled coil. Position 113 is a phosphoserine (Ser113). Residues 123-151 (KTIKKTARREQLMREEAEQKRLKTVLELQ) are a coiled coil. Arg163 is subject to Omega-N-methylarginine. The segment covering 325–335 (LQQQPQAASPS) has biased composition (low complexity). The segment at 325 to 347 (LQQQPQAASPSVPEPHSLTPVAQ) is disordered. 2 positions are modified to phosphoserine: Ser333 and Ser341. A G3BP1-binding region spans residues 358 to 379 (QDLMAQMQGPYNFIQDSMLDFE). 3 disordered regions span residues 412 to 496 (ESRL…AGTS), 526 to 558 (PANE…EQTE), and 570 to 707 (TYHG…QQVN). The segment covering 431-452 (PLVSSTSEGYTASQPLYQPSHA) has biased composition (polar residues). Residues 453 to 462 (TEQRPQKEPM) are compositionally biased toward basic and acidic residues. Polar residues predominate over residues 465–474 (IQATISLNTD). The segment covering 475–489 (QTTASSSLPAASQPQ) has biased composition (low complexity). 2 stretches are compositionally biased toward polar residues: residues 533 to 552 (LKQQ…SQPH) and 572 to 603 (HGSQ…QPYY). A Phosphotyrosine modification is found at Tyr623. Omega-N-methylarginine is present on residues Arg624 and Arg631. A phosphotyrosine mark is found at Tyr634 and Tyr637. Arg638 is modified (omega-N-methylarginine). Polar residues predominate over residues 640–655 (SFSNTPNSGYSQSQFT). Residues Ser642 and Ser647 are each glycosylated (O-linked (GlcNAc) serine). Tyr649, Tyr660, Tyr663, and Tyr668 each carry phosphotyrosine. Low complexity-rich tracts occupy residues 674–684 (RGSGQSGPRGA) and 695–707 (NRGM…QQVN). An Asymmetric dimethylarginine; alternate modification is found at Arg696. Residue Arg696 is modified to Omega-N-methylarginine; alternate.

The protein belongs to the caprin family. May form homomultimers. Interacts with G3BP1; interaction is direct and promotes stress granule formation. Interacts with G3BP2; interaction is direct and promotes stress granule formation. Interacts with PQBP1. Interacts with DDX3X. Interacts (when phosphorylated by EPHA4) with FMR1; interaction with FMR1 promotes formation of a membraneless compartment. Tyrosine phosphorylation by EPHA4 promotes interaction with FMR1 and liquid-liquid phase separation (LLPS) for the formation of a membraneless compartment that concentrates mRNAs with associated regulatory factors. In terms of processing, O-glycosylated (O-GlcNAcylated), in a cell cycle-dependent manner. O-glycosylation by OGT inhibit ability to undergo liquid-liquid phase separation (LLPS). In terms of tissue distribution, highest expression in thymus, spleen and brain (at protein level). Lower levels in kidney, muscle and liver (at protein level).

The protein localises to the cytoplasm. The protein resides in the cytoplasmic ribonucleoprotein granule. It localises to the cytosol. It is found in the cell projection. Its subcellular location is the dendrite. The protein localises to the lamellipodium. Ability to mediate liquid-liquid phase separation is regulated by ATP: moderate concentrations of ATP enhance phase separation, whereas high concentrations of ATP lead to inhibition of phase separation. In terms of biological role, mRNA-binding protein that acts as a regulator of mRNAs transport, translation and/or stability, and which is involved in neurogenesis, synaptic plasticity in neurons and cell proliferation and migration in multiple cell types. Plays an essential role in cytoplasmic stress granule formation. Acts as an mRNA regulator by mediating formation of some phase-separated membraneless compartment: undergoes liquid-liquid phase separation upon binding to target mRNAs, leading to assemble mRNAs into cytoplasmic ribonucleoprotein granules that concentrate mRNAs with associated regulatory factors. Undergoes liquid-liquid phase separation following phosphorylation and interaction with FMR1, promoting formation of cytoplasmic ribonucleoprotein granules that concentrate mRNAs with factors that inhibit translation and mediate deadenylation of target mRNAs. In these cytoplasmic ribonucleoprotein granules, CAPRIN1 mediates recruitment of CNOT7 deadenylase, leading to mRNA deadenylation and degradation. Binds directly and selectively to MYC and CCND2 mRNAs. In neuronal cells, directly binds to several mRNAs associated with RNA granules, including BDNF, CAMK2A, CREB1, MAP2, NTRK2 mRNAs, as well as to GRIN1 and KPNB1 mRNAs, but not to rRNAs. The protein is Caprin-1 (Caprin1) of Mus musculus (Mouse).